We begin with the raw amino-acid sequence, 549 residues long: Ribosomal protein S6 kinase-like 1 (549 aa).

Residues I87–N115 enclose the MIT domain. The Protein kinase domain occupies S145–F539. ATP is bound by residues R151 to I159 and K177. A disordered region spans residues L260 to H325. The Proton acceptor role is filled by D412.

Belongs to the protein kinase superfamily. Ser/Thr protein kinase family. S6 kinase subfamily.

It carries out the reaction L-seryl-[protein] + ATP = O-phospho-L-seryl-[protein] + ADP + H(+). The catalysed reaction is L-threonyl-[protein] + ATP = O-phospho-L-threonyl-[protein] + ADP + H(+). The polypeptide is Ribosomal protein S6 kinase-like 1 (RPS6KL1) (Pongo abelii (Sumatran orangutan)).